The sequence spans 179 residues: Endoribonuclease YbeY (179 aa).

Residues His-141, His-145, and His-151 each coordinate Zn(2+).

It belongs to the endoribonuclease YbeY family. It depends on Zn(2+) as a cofactor.

Its subcellular location is the cytoplasm. Functionally, single strand-specific metallo-endoribonuclease involved in late-stage 70S ribosome quality control and in maturation of the 3' terminus of the 16S rRNA. The protein is Endoribonuclease YbeY of Synechocystis sp. (strain ATCC 27184 / PCC 6803 / Kazusa).